The primary structure comprises 394 residues: NADH-quinone oxidoreductase subunit D 2 (394 aa).

Belongs to the complex I 49 kDa subunit family. In terms of assembly, NDH-1 is composed of 14 different subunits. Subunits NuoB, C, D, E, F, and G constitute the peripheral sector of the complex.

The protein resides in the cell membrane. The enzyme catalyses a quinone + NADH + 5 H(+)(in) = a quinol + NAD(+) + 4 H(+)(out). Functionally, NDH-1 shuttles electrons from NADH, via FMN and iron-sulfur (Fe-S) centers, to quinones in the respiratory chain. The immediate electron acceptor for the enzyme in this species is believed to be a menaquinone. Couples the redox reaction to proton translocation (for every two electrons transferred, four hydrogen ions are translocated across the cytoplasmic membrane), and thus conserves the redox energy in a proton gradient. The sequence is that of NADH-quinone oxidoreductase subunit D 2 from Streptomyces griseus subsp. griseus (strain JCM 4626 / CBS 651.72 / NBRC 13350 / KCC S-0626 / ISP 5235).